Here is a 413-residue protein sequence, read N- to C-terminus: uncharacterized protein (413 aa).

The next 4 helical transmembrane spans lie at 22-42 (VLLVSILSKIGISISIFTLIL), 270-290 (IIYVTLFLIIIISCFSVISIC), 312-332 (ILIQLIFFYYGMRFIIIGNLI), and 379-399 (LIIIFISTLTIGIVANWYPIY).

This sequence belongs to the ABC-4 integral membrane protein family. LolC/E subfamily.

The protein resides in the cell membrane. This is an uncharacterized protein from Buchnera aphidicola subsp. Schizaphis graminum (strain Sg).